We begin with the raw amino-acid sequence, 287 residues long: Pantothenate synthetase (287 aa).

An ATP-binding site is contributed by 30–37 (MGNLHSGH). Catalysis depends on histidine 37, which acts as the Proton donor. Residue glutamine 61 participates in (R)-pantoate binding. Glutamine 61 is a beta-alanine binding site. 149 to 152 (GEKD) lines the ATP pocket. Glutamine 155 contacts (R)-pantoate. Residues valine 178 and 186–189 (LSSR) each bind ATP.

The protein belongs to the pantothenate synthetase family. As to quaternary structure, homodimer.

It localises to the cytoplasm. It carries out the reaction (R)-pantoate + beta-alanine + ATP = (R)-pantothenate + AMP + diphosphate + H(+). The protein operates within cofactor biosynthesis; (R)-pantothenate biosynthesis; (R)-pantothenate from (R)-pantoate and beta-alanine: step 1/1. In terms of biological role, catalyzes the condensation of pantoate with beta-alanine in an ATP-dependent reaction via a pantoyl-adenylate intermediate. The protein is Pantothenate synthetase of Pseudomonas putida (strain W619).